The sequence spans 190 residues: A-type ATP synthase subunit E (190 aa).

The protein belongs to the V-ATPase E subunit family. Has multiple subunits with at least A(3), B(3), C, D, E, F, H, I and proteolipid K(x).

Its subcellular location is the cell membrane. Its function is as follows. Component of the A-type ATP synthase that produces ATP from ADP in the presence of a proton gradient across the membrane. This chain is A-type ATP synthase subunit E, found in Pyrobaculum islandicum (strain DSM 4184 / JCM 9189 / GEO3).